Reading from the N-terminus, the 296-residue chain is Probable transcription factor At1g44810 (296 aa).

The tract at residues Met1–Asn119 is disordered. The span at Glu19–Gly28 shows a compositional bias: acidic residues. Over residues Thr52 to Asn72 the composition is skewed to polar residues. Over residues Arg97–Asn119 the composition is skewed to basic and acidic residues.

It belongs to the GeBP family.

This Arabidopsis thaliana (Mouse-ear cress) protein is Probable transcription factor At1g44810.